Here is a 115-residue protein sequence, read N- to C-terminus: Succinate dehydrogenase assembly factor 3, mitochondrial (115 aa).

The protein belongs to the complex I LYR family. SDHAF3 subfamily. In terms of assembly, interacts with sdh2 within an sdh1-sdh2 subcomplex.

Its subcellular location is the mitochondrion matrix. Functionally, plays an essential role in the assembly of succinate dehydrogenase (SDH), an enzyme complex (also referred to as respiratory complex II) that is a component of both the tricarboxylic acid (TCA) cycle and the mitochondrial electron transport chain, and which couples the oxidation of succinate to fumarate with the reduction of ubiquinone (coenzyme Q) to ubiquinol. Promotes maturation of the iron-sulfur protein subunit sdh2 of the SDH catalytic dimer, protecting it from the deleterious effects of oxidants. May act together with SDHAF1. This Schizosaccharomyces pombe (strain 972 / ATCC 24843) (Fission yeast) protein is Succinate dehydrogenase assembly factor 3, mitochondrial.